A 1572-amino-acid polypeptide reads, in one-letter code: Helicase SWR1 (1572 aa).

Disordered stretches follow at residues 61–94 (SLEQDDMKESNASRRLKRRNVISGTADSSSDKNN), 119–291 (CGRR…SLNT), and 304–323 (TSSSEDDDNEKPRTALQKKS). 2 stretches are compositionally biased toward polar residues: residues 82 to 94 (ISGTADSSSDKNN) and 152 to 173 (TVVTAQGSAQNKLNTPVVSSPK). The span at 179–192 (TADKKSKLNKRDSS) shows a compositional bias: basic and acidic residues. Residues 216–232 (SKARLKSSKAKSKKRAV) are compositionally biased toward basic residues. A compositionally biased stretch (basic and acidic residues) spans 238–269 (LVRKQSPEIKNESKRTKADPTHTNDDGNDNRK). The span at 282 to 291 (ESGLKTSLNT) shows a compositional bias: polar residues. An HSA domain is found at 424–496 (ISVYYKEQSK…EEKRKKNLAR (73 aa)). Disordered stretches follow at residues 555-604 (TYPS…GNDM), 624-675 (FGNE…PGLS), and 694-749 (FDAD…AADP). Over residues 558 to 568 (SEASDASSEFS) the composition is skewed to low complexity. A compositionally biased stretch (acidic residues) spans 569-583 (ANEESDGNSDIDDEM). The span at 590–602 (DSDKEGNTERIGN) shows a compositional bias: basic and acidic residues. Over residues 643 to 657 (DSVSDSMEDSLSSSE) the composition is skewed to low complexity. The segment covering 694–705 (FDADSSSDDGLD) has biased composition (acidic residues). Positions 726-737 (SDNELKDEKAET) are enriched in basic and acidic residues. One can recognise a Helicase ATP-binding domain in the interval 777-942 (ASLYNNKTNG…WSLLYFLMPQ (166 aa)). 790-797 (DEMGLGKT) provides a ligand contact to ATP. A DEAH box motif is present at residues 893–896 (DEAH). In terms of domain architecture, Helicase C-terminal spans 1314–1464 (KLAQLLQNLK…NVVIQTGDFT (151 aa)). The interval 1505–1556 (AEDEDDAKAAKSALREVNVDNEDFQEGSVAAQDGNSDNENNEDSEDEYGGTS) is disordered. Basic and acidic residues predominate over residues 1511–1522 (AKAAKSALREVN). The segment covering 1543–1552 (ENNEDSEDEY) has biased composition (acidic residues).

This sequence belongs to the SNF2/RAD54 helicase family. SWR1 subfamily. Component of the SWR1 chromatin-remodeling complex.

It localises to the nucleus. It carries out the reaction ATP + H2O = ADP + phosphate + H(+). Its function is as follows. Catalytic component of the SWR1 complex which mediates the ATP-dependent exchange of histone H2A for the H2A variant HZT1 leading to transcriptional regulation of selected genes by chromatin remodeling. This is Helicase SWR1 (SWR1) from Kluyveromyces lactis (strain ATCC 8585 / CBS 2359 / DSM 70799 / NBRC 1267 / NRRL Y-1140 / WM37) (Yeast).